The following is a 248-amino-acid chain: Myelin protein P0 (248 aa).

Positions 1–28 (MAPGAPSSSPSPILAALLFSSLVLSPVQ) are cleaved as a signal peptide. At 29–155 (AIVVYTDKEV…VFEKVPTRYG (127 aa)) the chain is on the extracellular side. In terms of domain architecture, Ig-like V-type spans 30 to 143 (IVVYTDKEVH…DIVGKTSQVT (114 aa)). A disulfide bond links C50 and C127. N-linked (GlcNAc...) (complex) asparagine glycosylation occurs at N122. The helical transmembrane segment at 156–176 (VVLGAVIGGVLGVVLLALLLF) threads the bilayer. The Cytoplasmic segment spans residues 177-248 (YLIRYCWLRR…GLGESRKDKK (72 aa)). A Phosphoserine; by PKC modification is found at S210. The tract at residues 224-248 (DHSRSTKAASEKKTKGLGESRKDKK) is disordered. 2 positions are modified to phosphoserine: S226 and S228. Residues S233 and S243 each carry the phosphoserine; by PKC modification.

This sequence belongs to the myelin P0 protein family. In terms of assembly, homodimer and homotetramer. N-glycosylated; contains sulfate-substituted glycan. Found only in peripheral nervous system Schwann cells.

The protein resides in the cell membrane. In terms of biological role, is an adhesion molecule necessary for normal myelination in the peripheral nervous system. It mediates adhesion between adjacent myelin wraps and ultimately drives myelin compaction. The protein is Myelin protein P0 (MPZ) of Bos taurus (Bovine).